The sequence spans 377 residues: MSCIQTTFNEVLEKSLNHILDGIRPQIEAIDDAAFVAVTFAELTTLHLGGTPMAAVRCRSQHSVVEVVRLLDAHQIPLLIVGGGSNLVIADGEIPLVAVILDCDDISVTLDTGRVVAEAGAVWDDVVRLCVDAGLGGIECLSGIPGSAGATPVQNVGAYGAEISDVLVSVTLLERATGAVMEVPAADLELAYRYSNLKFTGRGVVLGITLQLHTDGMSAPLRFGELARVLGHEGPHPAVQVREAVLGLRAGKGMVYNEADHDTWSAGSFFTNPIVPESVGDHVRSVVGDESMPCFAAGEGMVKLSAAWLIDRAGFAKGHQGPGGRVSLSTKHTLALTNRGNATTDDLVALAREVRGGVMDAFGVLLEPEPVWVGVSI.

The region spanning 48–215 (LGGTPMAAVR…LGITLQLHTD (168 aa)) is the FAD-binding PCMH-type domain. Residue R193 is part of the active site. Catalysis depends on S268, which acts as the Proton donor. E369 is an active-site residue.

This sequence belongs to the MurB family. Requires FAD as cofactor.

The protein localises to the cytoplasm. The enzyme catalyses UDP-N-acetyl-alpha-D-muramate + NADP(+) = UDP-N-acetyl-3-O-(1-carboxyvinyl)-alpha-D-glucosamine + NADPH + H(+). It functions in the pathway cell wall biogenesis; peptidoglycan biosynthesis. Functionally, cell wall formation. The polypeptide is UDP-N-acetylenolpyruvoylglucosamine reductase (Corynebacterium diphtheriae (strain ATCC 700971 / NCTC 13129 / Biotype gravis)).